We begin with the raw amino-acid sequence, 246 residues long: Chlorophyll a-b binding protein 6A, chloroplastic (246 aa).

A chloroplast-targeting transit peptide spans 1–45 (MASNTLMSCGIPAVCPSFLSSTKSKFAAAMPVYVGATNFMSRFSM). W49 lines the chlorophyll b pocket. Chlorophyll a contacts are provided by F69, E88, and H91. R93 provides a ligand contact to chlorophyll b. The chain crosses the membrane as a helical span at residues 94–114 (WAMLAVPGIIVPEALGLGNWV). L130 serves as a coordination point for chlorophyll a. The chain crosses the membrane as a helical span at residues 133–153 (PVPWGTLPTILAIEFLAIAFV). Residues V134, E154, and R157 each coordinate chlorophyll b. 6 residues coordinate chlorophyll a: K191, E192, N195, R197, Q209, and H225.

This sequence belongs to the light-harvesting chlorophyll a/b-binding (LHC) protein family. As to quaternary structure, the LHC complex consists of chlorophyll a-b binding proteins. Binds at least 14 chlorophylls (8 Chl-a and 6 Chl-b) and carotenoids such as lutein and neoxanthin. serves as cofactor. In terms of processing, photoregulated by reversible phosphorylation of its threonine residues.

It localises to the plastid. It is found in the chloroplast thylakoid membrane. Functionally, the light-harvesting complex (LHC) functions as a light receptor, it captures and delivers excitation energy to photosystems with which it is closely associated. The sequence is that of Chlorophyll a-b binding protein 6A, chloroplastic (CAB6A) from Solanum lycopersicum (Tomato).